The following is a 510-amino-acid chain: D-alanine--D-alanyl carrier protein ligase (510 aa).

157 to 158 (TS) provides a ligand contact to ATP. Residue D202 coordinates D-alanine. 297–302 (NTYGPT) is an ATP binding site. D-alanine is bound at residue V306. ATP-binding residues include D389 and K498. Residue K498 coordinates D-alanine.

It belongs to the ATP-dependent AMP-binding enzyme family. DltA subfamily.

The protein localises to the cytoplasm. It catalyses the reaction holo-[D-alanyl-carrier protein] + D-alanine + ATP = D-alanyl-[D-alanyl-carrier protein] + AMP + diphosphate. Its pathway is cell wall biogenesis; lipoteichoic acid biosynthesis. In terms of biological role, catalyzes the first step in the D-alanylation of lipoteichoic acid (LTA), the activation of D-alanine and its transfer onto the D-alanyl carrier protein (Dcp) DltC. In an ATP-dependent two-step reaction, forms a high energy D-alanyl-AMP intermediate, followed by transfer of the D-alanyl residue as a thiol ester to the phosphopantheinyl prosthetic group of the Dcp. D-alanylation of LTA plays an important role in modulating the properties of the cell wall in Gram-positive bacteria, influencing the net charge of the cell wall. This chain is D-alanine--D-alanyl carrier protein ligase, found in Listeria monocytogenes serovar 1/2a (strain ATCC BAA-679 / EGD-e).